We begin with the raw amino-acid sequence, 249 residues long: UPF0246 protein Lreu_0493 (249 aa).

Belongs to the UPF0246 family.

This chain is UPF0246 protein Lreu_0493, found in Limosilactobacillus reuteri (strain DSM 20016) (Lactobacillus reuteri).